A 395-amino-acid chain; its full sequence is RNA demethylase ALKBH5 (395 aa).

Disordered stretches follow at residues 1–28 (MAAA…AGSR) and 47–83 (AAEP…EEEA). The residue at position 2 (A2) is an N-acetylalanine. A Glycyl lysine isopeptide (Lys-Gly) (interchain with G-Cter in ubiquitin) cross-link involves residue K58. A compositionally biased stretch (basic and acidic residues) spans 60-83 (KYQEDSDPERSDYEEHQLQKEEEA). A phosphoserine mark is found at S65 and S70. Positions 68 to 117 (ERSDYEEHQLQKEEEARKVKSGIRQIRLFSQDECSKIEARIDEVVSRAEK) form a coiled coil. The residue at position 72 (Y72) is a Phosphotyrosine. K87 is covalently cross-linked (Glycyl lysine isopeptide (Lys-Gly) (interchain with G-Cter in SUMO1)). At S88 the chain carries Phosphoserine. K133 is modified (N6-acetyllysine). Y140 is a catalytic residue. Residues N194, Y196, and H205 each coordinate 2-oxoglutarate. An intrachain disulfide couples C231 to C268. K236 carries the post-translational modification N6-acetyllysine. Positions 267 and 278 each coordinate 2-oxoglutarate. Residues 294 to 395 (ETKSLSSSTL…PTRKVKMRRH (102 aa)) are disordered. Positions 296 to 306 (KSLSSSTLPPS) are enriched in low complexity. Residue K322 forms a Glycyl lysine isopeptide (Lys-Gly) (interchain with G-Cter in SUMO1) linkage. S326 is modified (phosphoserine). Residue K329 forms a Glycyl lysine isopeptide (Lys-Gly) (interchain with G-Cter in SUMO2) linkage. The segment covering 329 to 350 (KADPDAAHRPRILEMDKEENRR) has biased composition (basic and acidic residues). R360 carries the omega-N-methylarginine modification. Residues S362, S372, S375, and S385 each carry the phosphoserine modification.

Belongs to the alkB family. In terms of assembly, monomer. Interacts with RBM33; promoting desumoylation by SENP1 and recruitment to N(6)-methyladenosine-containing mRNAs. Interacts (when acetylated by KAT8) with PSPC1; interaction facilitates recognition of N(6)-methyladenosine (m6A) mRNA. Fe(2+) serves as cofactor. In terms of processing, phosphorylated at Ser-88 and Ser-326 in response to reactive oxygen species (ROS), promoting sumoylation and inactivation. Acetylated by KAT8 at Lys-236, promoting interaction with PSPC1, thereby facilitating recognition of N(6)-methyladenosine (m6A) mRNA by ALKBH5. Deacetylated at Lys-236 by HDAC7. Post-translationally, sumoylated at Lys-87 and Lys-322 by PIAS4 following phosphorylation at Ser-88 and Ser-326 in response to reactive oxygen species (ROS), inhibiting the RNA demethylase activity. Desumoylated by SENP1; relieving RNA demethylase inhibition, leading to N(6)-methyladenosine-containing mRNAs demethylation. In terms of processing, ubiquitinated at Lys-58 via 'Lys-48'-linked polyubiquitin chain, leading to its degradation by the proteasome. Deubiquitinated at Lys-58 by USP9X, promoting its stabilizazion.

The protein localises to the nucleus speckle. The enzyme catalyses an N(6)-methyladenosine in mRNA + 2-oxoglutarate + O2 = an adenosine in mRNA + formaldehyde + succinate + CO2. With respect to regulation, RNA demethylase activity is inhibited following sumoylation. Inhibition is relieved following desumoylation. In terms of biological role, dioxygenase that specifically demethylates N(6)-methyladenosine (m6A) RNA, the most prevalent internal modification of messenger RNA (mRNA) in higher eukaryotes. Demethylates RNA by oxidative demethylation, which requires molecular oxygen, alpha-ketoglutarate and iron. Demethylation of m6A mRNA affects mRNA processing, translation and export. Can also demethylate N(6)-methyladenosine in single-stranded DNA (in vitro). Required for the late meiotic and haploid phases of spermatogenesis by mediating m6A demethylation in spermatocytes and round spermatids: m6A demethylation of target transcripts is required for correct splicing and the production of longer 3'-UTR mRNAs in male germ cells. Involved in paraspeckle assembly, a nuclear membraneless organelle, by undergoing liquid-liquid phase separation. Paraspeckle assembly is coupled with m6A demethylation of RNAs, such as NEAT1 non-coding RNA. Also acts as a negative regulator of T-cell development: inhibits gamma-delta T-cell proliferation via demethylation of JAG1 and NOTCH2 transcripts. Inhibits regulatory T-cell (Treg) recruitment by mediating demethylation and destabilization of CCL28 mRNAs. This Rattus norvegicus (Rat) protein is RNA demethylase ALKBH5 (Alkbh5).